Here is a 125-residue protein sequence, read N- to C-terminus: MRIAGVNLPLNKHAVIALTHVYGIGNTTAKTILKRAGIAPDRKISDLNDAEAHAIRELVAEEYKVEGQARGEQQLAIKRLMDIGCYRGLRHRRSLPVRGQNTQTNARTRKGKRKTVAGKKKAARK.

The tract at residues 92-125 (RRSLPVRGQNTQTNARTRKGKRKTVAGKKKAARK) is disordered. The segment covering 107 to 125 (RTRKGKRKTVAGKKKAARK) has biased composition (basic residues).

The protein belongs to the universal ribosomal protein uS13 family. As to quaternary structure, part of the 30S ribosomal subunit. Forms a loose heterodimer with protein S19. Forms two bridges to the 50S subunit in the 70S ribosome.

Its function is as follows. Located at the top of the head of the 30S subunit, it contacts several helices of the 16S rRNA. In the 70S ribosome it contacts the 23S rRNA (bridge B1a) and protein L5 of the 50S subunit (bridge B1b), connecting the 2 subunits; these bridges are implicated in subunit movement. Contacts the tRNAs in the A and P-sites. In Chlorobium luteolum (strain DSM 273 / BCRC 81028 / 2530) (Pelodictyon luteolum), this protein is Small ribosomal subunit protein uS13.